A 92-amino-acid polypeptide reads, in one-letter code: MTKGTSSFGKRHNKTHTLCRRCGRRSYHIQKSTCANCGYPAAKTRKYNWSEKAKRRKTTGSGRTAHLRDVHRRFKNGFQVGTPKGARGPENH.

Zn(2+) is bound by residues Cys-19, Cys-22, Cys-34, and Cys-37. The C4-type zinc finger occupies 19-37 (CRRCGRRSYHIQKSTCANC). The tract at residues 50–92 (SEKAKRRKTTGSGRTAHLRDVHRRFKNGFQVGTPKGARGPENH) is disordered.

Belongs to the eukaryotic ribosomal protein eL37 family. It depends on Zn(2+) as a cofactor.

Its function is as follows. Binds to the 23S rRNA. The sequence is that of Large ribosomal subunit protein eL37 (rpl37) from Emericella nidulans (strain FGSC A4 / ATCC 38163 / CBS 112.46 / NRRL 194 / M139) (Aspergillus nidulans).